A 672-amino-acid chain; its full sequence is Acetoacetyl-CoA synthetase (672 aa).

Belongs to the ATP-dependent AMP-binding enzyme family.

Its subcellular location is the cytoplasm. The protein localises to the cytosol. It carries out the reaction acetoacetate + ATP + CoA = acetoacetyl-CoA + AMP + diphosphate. Converts acetoacetate to acetoacetyl-CoA in the cytosol. Ketone body-utilizing enzyme, responsible for the synthesis of cholesterol and fatty acids. This is Acetoacetyl-CoA synthetase (Aacs) from Mus musculus (Mouse).